We begin with the raw amino-acid sequence, 847 residues long: E4 SUMO-protein ligase PIAL1 (847 aa).

The segment at 113 to 271 (VNSPVTLISQ…EVVGSNSDCD (159 aa)) is interacting domain (IND), required for interaction with MOM1 and PIAL2. The SP-RING-type zinc-finger motif lies at 268–349 (SDCDIIEGPS…LRKILEEVGR (82 aa)). Residues Cys-299, His-301, Cys-322, and Cys-325 each coordinate Zn(2+). Repeat copies occupy residues 569–591 (QRPVPSYIAHPQTFHVNYGENAD), 592–614 (QRWMPSSIAHPQTLPVNYGGNTN), 615–637 (QRPIPSSIAHPQTLPVNYRGNTD), 638–659 (HRSTPYSITHLQTLLNYGGNAD), 660–682 (QRPMPSSITNLQTLPATYGGYAH), 683–705 (QRPMSSSITHPRTSPVNYGGTPD), and 706–728 (QRPMPSSITHPQTLPVSYGGTTD). Positions 569 to 728 (QRPVPSYIAH…LPVSYGGTTD (160 aa)) are 7 X 23 AA approximate tandem repeats.

This sequence belongs to the PIAL protein ligase family. As to quaternary structure, homodimer. Interacts with MOM1 and PIAL2 to form a high molecular mass complex which mediates transcriptional gene silencing at heterochromatin regions. In terms of tissue distribution, expressed in leaves, stems and flowers, and, at low levels, in siliques and old leaves.

It localises to the nucleus. Its pathway is protein modification; protein sumoylation. Its function is as follows. Together with MOM1 and PIAL2, regulates transcriptional gene silencing (TGS) independently of changes in DNA methylation. E4-type SUMO ligase that promotes SUMO chain formation in a SCE1-dependent manner and thus contributes to a pathway for proteolytic removal of sumoylation substrates. Involved in stress responses (e.g. osmotic, salt and abscisic acid ABA) and sulfur metabolism. The polypeptide is E4 SUMO-protein ligase PIAL1 (Arabidopsis thaliana (Mouse-ear cress)).